The primary structure comprises 238 residues: Uridylate kinase (238 aa).

12–15 (KLSG) provides a ligand contact to ATP. Residue Gly-54 coordinates UMP. ATP is bound by residues Gly-55 and Arg-59. Residues Asp-74 and 135–142 (TGNPYFTT) each bind UMP. Positions 162, 163, 168, and 171 each coordinate ATP.

Belongs to the UMP kinase family. Homohexamer.

It localises to the cytoplasm. The enzyme catalyses UMP + ATP = UDP + ADP. It participates in pyrimidine metabolism; CTP biosynthesis via de novo pathway; UDP from UMP (UMPK route): step 1/1. Inhibited by UTP. Functionally, catalyzes the reversible phosphorylation of UMP to UDP. In Rhodopseudomonas palustris (strain ATCC BAA-98 / CGA009), this protein is Uridylate kinase.